Reading from the N-terminus, the 894-residue chain is Phosphoenolpyruvate carboxylase (894 aa).

Active-site residues include histidine 143 and lysine 556.

The protein belongs to the PEPCase type 1 family. The cofactor is Mg(2+).

It carries out the reaction oxaloacetate + phosphate = phosphoenolpyruvate + hydrogencarbonate. Its function is as follows. Forms oxaloacetate, a four-carbon dicarboxylic acid source for the tricarboxylic acid cycle. The protein is Phosphoenolpyruvate carboxylase of Acinetobacter baumannii (strain ATCC 17978 / DSM 105126 / CIP 53.77 / LMG 1025 / NCDC KC755 / 5377).